A 291-amino-acid chain; its full sequence is MKRIVLFLATNLAIVLVLSLTMRLLGVEPYLTANGLNLTSLLIFAAVMGFGGSLISLAISKWMAKKSMGVQVIETPANSTEFWLVETVRKYADDAGIGMPEVGIFPSPEVNAFATGMNKNNALVAVSAGLLSTMTRAEAEAVIGHEVAHVANGDMVTLALIQGVVNTFVMFLSRIIGHTVDRVVFKNEEGHGPAFFVTMIVAELVLGILASIIVMWFSRQREFRADRGGASLAGKGAMIAALERLRSLHPHPLPDKMAAFGIAGGGAAGLKRLFMTHPPLEERIAALRAVQ.

The next 2 helical transmembrane spans lie at 4–24 and 39–59; these read IVLF…TMRL and TSLL…SLAI. H145 is a binding site for Zn(2+). E146 is a catalytic residue. H149 is a Zn(2+) binding site. The next 2 membrane-spanning stretches (helical) occupy residues 156–176 and 195–215; these read VTLA…SRII and FFVT…IIVM. Residue E222 participates in Zn(2+) binding.

It belongs to the peptidase M48B family. Zn(2+) serves as cofactor.

The protein localises to the cell inner membrane. In Thiobacillus denitrificans (strain ATCC 25259 / T1), this protein is Protease HtpX homolog.